The chain runs to 308 residues: Acetaldehyde dehydrogenase 2 (308 aa).

12-15 provides a ligand contact to NAD(+); that stretch reads SGNI. The Acyl-thioester intermediate role is filled by cysteine 127. Residues 162 to 170 and asparagine 281 contribute to the NAD(+) site; that span reads SAGPGTRAN.

This sequence belongs to the acetaldehyde dehydrogenase family.

It carries out the reaction acetaldehyde + NAD(+) + CoA = acetyl-CoA + NADH + H(+). The protein is Acetaldehyde dehydrogenase 2 of Mycobacterium marinum (strain ATCC BAA-535 / M).